The chain runs to 555 residues: Wee1-like protein kinase 2 (555 aa).

Positions 1–112 (MADTETDQGL…NFSTPKNSLG (112 aa)) are disordered. Phosphoserine; by CaMK2 and PKA is present on Ser-15. Residues 26–41 (EGQMTAQDIGGAQSQK) show a composition bias toward polar residues. A compositionally biased stretch (basic and acidic residues) spans 57–72 (TRDELHTSLSRDKESP). Ser-71 is modified (phosphoserine). The span at 102–112 (TNFSTPKNSLG) shows a compositional bias: polar residues. The Nuclear localization signal motif lies at 167–169 (KRK). A Protein kinase domain is found at 208–485 (FFEIEKIGVG…ARSRILWPFL (278 aa)). Residues 214–222 (IGVGEFGTV) and Lys-237 contribute to the ATP site. The short motif at 310-324 (KLKDILLQISLGLKY) is the Nuclear export signal element. Asp-334 acts as the Proton acceptor in catalysis. Residues Asn-339 and Asp-375 each coordinate Mg(2+). The stretch at 488–514 (TDELQKQLNLEKSKTATLKRELKKARH) forms a coiled coil.

The protein belongs to the protein kinase superfamily. Ser/Thr protein kinase family. WEE1 subfamily. Phosphorylated by PKA at Ser-15 in vitro, leading to activate kinase activity. Phosphorylation at Ser-15 by CaMK2, leading to increase its activity and promote metaphase II exit during egg activation. As to expression, ovary-specific.

The protein localises to the cytoplasm. It localises to the nucleus. It carries out the reaction L-tyrosyl-[protein] + ATP = O-phospho-L-tyrosyl-[protein] + ADP + H(+). In terms of biological role, oocyte-specific protein tyrosine kinase that phosphorylates and inhibits CDK1 and acts as a key regulator of meiosis during both prophase I and metaphase II. Required to maintain meiotic arrest in oocytes during the germinal vesicle (GV) stage, a long period of quiescence at dictyate prophase I, by phosphorylating CDK1 at 'Tyr-15', leading to inhibit CDK1 activity and prevent meiotic reentry. Also required for metaphase II exit during egg activation by phosphorylating CDK1 at 'Tyr-15', to ensure exit from meiosis in oocytes and promote pronuclear formation. The sequence is that of Wee1-like protein kinase 2 (Wee2) from Mus musculus (Mouse).